The sequence spans 88 residues: Large ribosomal subunit protein bL27 (88 aa).

This sequence belongs to the bacterial ribosomal protein bL27 family.

This chain is Large ribosomal subunit protein bL27, found in Mycolicibacterium smegmatis (strain ATCC 700084 / mc(2)155) (Mycobacterium smegmatis).